Here is a 109-residue protein sequence, read N- to C-terminus: MKVLVLFSVLFLTLFSYSSTEAIDEFDSDAEDDMLSLMANEQVRAKACTPRLHDCSHDRHSCCRGELFKDVCYCFYPEGEDITEVCSCQQPKSHKYIEKVVDKAKTVVG.

Residues 1–22 form the signal peptide; it reads MKVLVLFSVLFLTLFSYSSTEA. Residues 23–44 constitute a propeptide that is removed on maturation; the sequence is IDEFDSDAEDDMLSLMANEQVR. Residues 45 to 88 form a knottin domain region; the sequence is AKACTPRLHDCSHDRHSCCRGELFKDVCYCFYPEGEDITEVCSC. Intrachain disulfides connect cysteine 48–cysteine 63, cysteine 55–cysteine 72, cysteine 62–cysteine 88, and cysteine 74–cysteine 86. Residues 89–108 are linear cationic cytotoxin domain; the sequence is QQPKSHKYIEKVVDKAKTVV.

The protein belongs to the neurotoxin 19 (CSTX) family. 05 (U4-Lctx) subfamily. As to expression, expressed by the venom gland.

It localises to the secreted. Its function is as follows. Enhances the high-affinity desensitization of human P2RX3 purinoceptors. This is U4-lycotoxin-Ls1c from Lycosa singoriensis (Wolf spider).